The following is a 516-amino-acid chain: Pickpocket protein 11 (516 aa).

2 helical membrane passes run 117 to 137 (ILWWLLICNAVLLSFTLVIMS) and 454 to 474 (FIGTFGGITGLFMGCSFVSVF).

The protein belongs to the amiloride-sensitive sodium channel (TC 1.A.6) family. In terms of tissue distribution, expressed in embryonic and larval tracheal systems in the dorsal trunk and transverse connective (TC), but not in the junction between the dorsal trunk and TC, and in several tracheal branches and terminal cells. In larvae, also expressed in ventral pits. Expressed in the taste-sensing terminal organ of the larval head. In adult, expressed in hairs on the tibia, femur, tarsi of the leg and wing margin.

Its subcellular location is the membrane. In terms of biological role, part of a complex that plays a role in tracheal liquid clearance. In both larvae and adults, contributes to the behavioral response to salt. Probable role in sodium transport. This chain is Pickpocket protein 11 (ppk11), found in Drosophila melanogaster (Fruit fly).